A 301-amino-acid chain; its full sequence is HTH-type transcriptional regulator EstR (301 aa).

Residues 5 to 62 form the HTH lysR-type domain; the sequence is PSLRQLSYLVTLSETLHFTEAARRSFVTQSTLSGGIMELERLLGGVLVERDRQNVRLT. The H-T-H motif DNA-binding region spans 22–41; that stretch reads FTEAARRSFVTQSTLSGGIM.

It belongs to the LysR transcriptional regulatory family.

Transcriptional regulator of the esterase operon. This Acinetobacter baylyi (strain ATCC 33305 / BD413 / ADP1) protein is HTH-type transcriptional regulator EstR (estR).